A 155-amino-acid polypeptide reads, in one-letter code: Cytochrome c-type biogenesis protein CcmE (155 aa).

Topologically, residues 1 to 8 are cytoplasmic; the sequence is MHPKRKQR. The chain crosses the membrane as a helical; Signal-anchor for type II membrane protein span at residues 9–29; that stretch reads LILVLFVVLVSSVGVSLTLYA. The Periplasmic portion of the chain corresponds to 30-155; sequence LNENINLFYP…KTCKGISYDS (126 aa). Residues His124 and Tyr128 each coordinate heme.

Belongs to the CcmE/CycJ family.

The protein localises to the cell inner membrane. In terms of biological role, heme chaperone required for the biogenesis of c-type cytochromes. Transiently binds heme delivered by CcmC and transfers the heme to apo-cytochromes in a process facilitated by CcmF and CcmH. The polypeptide is Cytochrome c-type biogenesis protein CcmE (Teredinibacter turnerae (strain ATCC 39867 / T7901)).